The chain runs to 592 residues: Aspartate--tRNA ligase (592 aa).

Glu180 provides a ligand contact to L-aspartate. Residues 204 to 207 are aspartate; that stretch reads QLFK. Arg226 lines the L-aspartate pocket. Residues 226–228 and Gln235 each bind ATP; that span reads RDE. His455 contributes to the L-aspartate binding site. Glu489 is a binding site for ATP. Position 496 (Arg496) interacts with L-aspartate. ATP is bound at residue 541–544; that stretch reads GFDR.

This sequence belongs to the class-II aminoacyl-tRNA synthetase family. Type 1 subfamily. Homodimer.

It is found in the cytoplasm. It catalyses the reaction tRNA(Asp) + L-aspartate + ATP = L-aspartyl-tRNA(Asp) + AMP + diphosphate. Catalyzes the attachment of L-aspartate to tRNA(Asp) in a two-step reaction: L-aspartate is first activated by ATP to form Asp-AMP and then transferred to the acceptor end of tRNA(Asp). This chain is Aspartate--tRNA ligase, found in Clostridium tetani (strain Massachusetts / E88).